The sequence spans 507 residues: Arylsulfatase A (507 aa).

Residues 1–18 (MEALWTLTLALAAGLAAA) form the signal peptide. Positions 29, 30, and 69 each coordinate Ca(2+). Cysteine 69 (nucleophile) is an active-site residue. 3-oxoalanine (Cys) is present on cysteine 69. Substrate is bound at residue lysine 123. Histidine 125 is a catalytic residue. Serine 150 lines the substrate pocket. Intrachain disulfides connect cysteine 156/cysteine 172 and cysteine 161/cysteine 168. Asparagine 158 is a glycosylation site (N-linked (GlcNAc...) asparagine). Asparagine 184 is a glycosylation site (N-linked (GlcNAc...) asparagine). Substrate is bound at residue histidine 229. Ca(2+) is bound by residues aspartate 281 and asparagine 282. Disulfide bonds link cysteine 300/cysteine 414, cysteine 488/cysteine 500, cysteine 489/cysteine 502, and cysteine 493/cysteine 499. Lysine 302 serves as a coordination point for substrate. A glycan (N-linked (GlcNAc...) asparagine) is linked at asparagine 350.

Belongs to the sulfatase family. As to quaternary structure, homodimer at neutral pH and homooctamer at acidic pH. Exists both as a single chain of 58 kDa (component A) or as a chain of 50 kDa (component B) linked by disulfide bond(s) to a 7 kDa chain (component C). Interacts with SUMF1. Ca(2+) serves as cofactor. In terms of processing, the conversion to 3-oxoalanine (also known as C-formylglycine, FGly), of a serine or cysteine residue in prokaryotes and of a cysteine residue in eukaryotes, is critical for catalytic activity. This post-translational modification is severely defective in multiple sulfatase deficiency (MSD).

The protein resides in the endoplasmic reticulum. The protein localises to the lysosome. The catalysed reaction is an N-acyl-1-beta-D-(3-O-sulfo)-galactosyl-sphing-4-enine + H2O = a beta-D-galactosyl-(1&lt;-&gt;1')-N-acylsphing-4-enine + sulfate + H(+). Hydrolyzes cerebroside sulfate. The protein is Arylsulfatase A (ARSA) of Bos taurus (Bovine).